The chain runs to 744 residues: MSSTRIELDQDFIDQVKHEIKPHWGELGWVTYKRTYARWLPEKNRSENWDETVKRVIEGNVNLDPRLQGTPSEEVINELTNEAKQLFRLTYGLSATPSGRNLWISGTDYQKRTGDSLNNCWFIAIRPQEYGDSHIVPTYIDKREKAVSMPFSFLFDQLMKGGGVGFSVVNSNIKQIPKVDNKIDLTVVINKSSKSHDASIKVGAVDKDEWEKQNPDHDDIIYYRLPDTREGWVLANARLIDMHFNNTNPDQKTKLVLDISDIRPYGAKIHGFGGTASGPMPLVEMFIDINNVINARVGKNLTAVDATDICNLIGKTVVAGNVRRSAELALGSNDDQDFIKMKQDKEKLYHHRWASNNSVAINSKFNNYGPIADGILHNGEPGIVNLDLSRNYGRIVDGYQPGIDDDVEGTNPCGEISLANGEPCNLFEVFPYTAEKQGWNLKEAFTLATRFAKRVTFSHYDWEVSRKIIQKNRRIGVSMSGIQDWLLNDLGHRVVTGFEDAVDEQSGEKIKKPIYDPKGIEMVDSLYKAVITADKAYSEELGVNPSIKHTTVKPSGTVAKLAGVSEGMHFHYAGYLIQRIRFQASDPLLPALKECGYHTEPDIYTKNTICVEFPLRAAHADSKNFASAGTVSIEEQFATQAFLQTYWSDNAVSCTITFQSDENDEIAPLLRQYRHTIKSTSLLPYYGGSLKQAPKEPINKKTYEERAALITDDVEEVFTKQNDDQKGLELVGQTDCEGGACPIK.

An intrachain disulfide couples Cys-120 to Cys-424. Residues 148–159 are effector region-1; the sequence is SMPFSFLFDQLM. The interval 169–318 is effector region-2; sequence VNSNIKQIPK…ICNLIGKTVV (150 aa). Residues Cys-413 and Glu-415 contribute to the active site. An adenosylcobalamin-binding-1 region spans residues 570-631; the sequence is FHYAGYLIQR…SKNFASAGTV (62 aa). The adenosylcobalamin-binding-2 stretch occupies residues 690–729; the sequence is LKQAPKEPINKKTYEERAALITDDVEEVFTKQNDDQKGLE.

Belongs to the class II ribonucleoside-triphosphate reductase family. As to quaternary structure, monomer. The cofactor is adenosylcob(III)alamin.

It catalyses the reaction a 2'-deoxyribonucleoside 5'-triphosphate + [thioredoxin]-disulfide + H2O = a ribonucleoside 5'-triphosphate + [thioredoxin]-dithiol. With respect to regulation, allosterically regulated by ATP and dNTP. The chain is Adenosylcobalamin-dependent ribonucleoside-triphosphate reductase (rtpR) from Lactobacillus acidophilus (strain ATCC 700396 / NCK56 / N2 / NCFM).